We begin with the raw amino-acid sequence, 191 residues long: dTTP/UTP pyrophosphatase (191 aa).

The Proton acceptor role is filled by Asp-75.

It belongs to the Maf family. YhdE subfamily. The cofactor is a divalent metal cation.

It localises to the cytoplasm. The enzyme catalyses dTTP + H2O = dTMP + diphosphate + H(+). It carries out the reaction UTP + H2O = UMP + diphosphate + H(+). Functionally, nucleoside triphosphate pyrophosphatase that hydrolyzes dTTP and UTP. May have a dual role in cell division arrest and in preventing the incorporation of modified nucleotides into cellular nucleic acids. The chain is dTTP/UTP pyrophosphatase from Aliivibrio fischeri (strain ATCC 700601 / ES114) (Vibrio fischeri).